A 391-amino-acid chain; its full sequence is MTRVGVLLMNLGGPERIKDVGPFLYNLFSDPEIIRLPLPIFQKPLAWFISTLRSSKSQKAYQAIGGGSPLRRITEQQARELQSALRNRGINATSYVAMRYWHPFTESAVEDIKADNINEVVVLPLYPHFSISTSGSSFRELRRLREVDKEFQKLSIRCIRSWFDNTGYIASMAELIEQEISSCESPNAAHICFTAHGVPKSYVEEAGDPYKDEIQDCALLIIDKVEKSLGFSNSYTLSYQSRVGPEEWLKPYTEEVLEELGANGVKELIVVPISFVSEHIETLQEIDIEYKKIALNNGIINFRRVKALDTYPLFINGLADLVASCLSGPEISLDEAAKLPEKVKLYPQEKWQWGWNNSAEVWNGRVAMFVFIICFFELVIGNGPLHYIGLL.

The Fe cation site is built by His-196 and Glu-281.

Belongs to the ferrochelatase family.

It localises to the cytoplasm. It catalyses the reaction heme b + 2 H(+) = protoporphyrin IX + Fe(2+). Its pathway is porphyrin-containing compound metabolism; protoheme biosynthesis; protoheme from protoporphyrin-IX: step 1/1. Catalyzes the ferrous insertion into protoporphyrin IX. The sequence is that of Ferrochelatase from Prochlorococcus marinus (strain SARG / CCMP1375 / SS120).